The following is a 498-amino-acid chain: Minor fimbrium subunit Mfa1 (498 aa).

Positions 1–19 are cleaved as a signal peptide; that stretch reads MKLNKMFLVGALLSLGFAS. A lipid anchor (N-palmitoyl cysteine) is attached at C20. C20 is lipidated: S-diacylglycerol cysteine. Positions 20–50 are excised as a propeptide; the sequence is CSKEGNGPAPDSSSTADTHMSVSMSLPQHNR. A disordered region spans residues 436–476; it reads SGNPFVPTDPDPNNPDTPDNPDTPDPEDPDTPNPEEPLPVQ.

This sequence belongs to the bacteroidetes fimbrillin superfamily. FimA/Mfa1 family. As to quaternary structure, structural component of the fimbrial stalk. Minor fimbriae are composed of a structural subunit, most often Mfa1, and the accessory subunits Mfa3, Mfa4 and Mfa5. Mfa1 interacts with Mfa2; this anchors the fimbrium in the membrane. Fimbrium assembly occurs by linear, head-to-tail oligomerization of fimbrial subunits. This is mediated via insertion of a C-terminal beta-strand from one subunit into a groove in the N-terminal domain of the following subunit.

It localises to the fimbrium. Its subcellular location is the cell outer membrane. Its function is as follows. Structural subunit of the minor fimbriae. These filamentous pili are attached to the cell surface; they mediate biofilm formation, adhesion onto host cells and onto other bacteria that are part of the oral microbiome. They play an important role in invasion of periodontal tissues and are recognized as major virulence factors. Mfa1 orthologs from different strains have highly divergent sequences, and this correlates with pathogenicity. This Porphyromonas gingivalis (Bacteroides gingivalis) protein is Minor fimbrium subunit Mfa1.